The following is a 345-amino-acid chain: NADH-quinone oxidoreductase subunit H (345 aa).

The next 8 membrane-spanning stretches (helical) occupy residues 14–34 (IILA…LFLV), 84–104 (FILA…VIPF), 115–135 (VAIL…IMGG), 161–181 (IGLI…GDIV), 187–207 (GWGF…LFFI), 248–268 (YIAI…GWLS), 277–297 (VLWM…VKAI), and 309–329 (LGWK…AFAA).

It belongs to the complex I subunit 1 family. As to quaternary structure, NDH-1 is composed of 14 different subunits. Subunits NuoA, H, J, K, L, M, N constitute the membrane sector of the complex.

It is found in the cell inner membrane. It catalyses the reaction a quinone + NADH + 5 H(+)(in) = a quinol + NAD(+) + 4 H(+)(out). NDH-1 shuttles electrons from NADH, via FMN and iron-sulfur (Fe-S) centers, to quinones in the respiratory chain. The immediate electron acceptor for the enzyme in this species is believed to be ubiquinone. Couples the redox reaction to proton translocation (for every two electrons transferred, four hydrogen ions are translocated across the cytoplasmic membrane), and thus conserves the redox energy in a proton gradient. This subunit may bind ubiquinone. In Ruegeria pomeroyi (strain ATCC 700808 / DSM 15171 / DSS-3) (Silicibacter pomeroyi), this protein is NADH-quinone oxidoreductase subunit H.